Here is a 62-residue protein sequence, read N- to C-terminus: Small ribosomal subunit protein eS17 (62 aa).

This sequence belongs to the eukaryotic ribosomal protein eS17 family.

The protein is Small ribosomal subunit protein eS17 of Methanoculleus marisnigri (strain ATCC 35101 / DSM 1498 / JR1).